The chain runs to 1305 residues: MNSVRRLNSILTLVLSGLWHLGLTATNYNCDEPLASFLSPLAFFSSSDLNGRFSPPQLNWRIGSGGWSPAVSNAHQWLQIDLGNRVEITAVATQGRYGSTDWVTSYRLMFSDTGHNWQQYKQKDSIWTFVGNTNADGVVYHKLLHSMRARFVRFVPLEWNSNGKIGMRVEVYGCSYKSDIVGFDGQSTLLYRFNQKTMSTLKDVISLKFKSMQGDGVLFHGEGQRGDHITLELQKGRLALYLNIDGSKARLSIIAPLAILGSLLDDQHWHSVLLERVGKQANFTVDRNTQHFQIKGETDALDIDYELSFGGIPVPSKPGTFLKKNFHGCIENVYYNGVNIIDLAKRRKHQIYSGNVTFSCSEPEIVPITFVNSRSSYLLLPGIPQIHGLSVSFHFRTWNEDGLLLSTELSEGSGTLLLILDGGSLRLLIKKVARHGTEIITGSSLNDGLWHSVSINARRNRVTLTLDNDAASPALDTSQLQIYSGNSYYFGGCPDNLTDSQCLNPIKAFQGCMRLIFIDNQPKDLISVQQGSMGNFSDLHIDLCSIKDRCLPNYCEHGGHCAQNWTTFYCNCSDTGYTGATCHDSVYEQSCEVYRHKGHTAGFFYVDSDGSGPLGPLQVYCNITEDKIWMTVQHNNTELTWVQISNAEKAYAMTFNYGGSMEQLEALIDGSEHCEQEVTYYCRRSHLLKTPDGAPFTWWIGRSNKRHNYWEGSVPRVQQCRCVHKENCLDIRSFCNCDADIGEWAKETGFLSFKDHLPVTQIITTDTNRSKSEAAWKIGPLRCYGDRHFWNAVSFTTEASYLYFPTFHAEFSADISFFFKTTALSGVFLENLGIKDFLRLEMSSPSEITFTIDVGNGPVELLIQSPYPLNDNQWHYIRAERNLKETSLQVDNLPQSMREASEEAYFRLHLTSQLFVGGTSSRQKGFLGCMRSLHLNGQNTDLIERAKLMSGVTPGCLGHCSSYGSNCLNGGKCVEKQSGYSCDCTNSPNEGPFCQKEISALFNSGTSVTYLFQEPYLVIKNTSLLSSPIYADTAPSKETIMLNFLTTQAPTILLYLNFSSQNFLAILLSRNGSLQICFRLSKIESHVYTMNTENLANGRVHQVKINKDGPELSIQMDQQLFTYNFSPKVEFWTLKSLVLGKVTETLGLDPEVAKVNILGFVGCLSSVQYNHIAPLKAALRHSGIAPVTVQGTLTESGCDSTLDSDVNAVTTVHSSLDPIGKRDEREPLTDTVQSDSAVIGGIIALVTFVTFCVIGIMIHFLYLHKQSHCTNQTKEKEYSENLSNSFRNAIDLQNTASECKREYFI.

The first 24 residues, 1-24 (MNSVRRLNSILTLVLSGLWHLGLT), serve as a signal peptide directing secretion. Residues 25 to 1237 (ATNYNCDEPL…LTDTVQSDSA (1213 aa)) lie on the Extracellular side of the membrane. Positions 30–174 (CDEPLASFLS…IGMRVEVYGC (145 aa)) constitute an F5/8 type C domain. A disulfide bond links Cys30 and Cys174. 2 consecutive Laminin G-like domains span residues 180–360 (IVGF…TFSC) and 367–544 (PITF…IDLC). Asn282 carries an N-linked (GlcNAc...) asparagine glycan. The cysteines at positions 329 and 360 are disulfide-linked. An N-linked (GlcNAc...) asparagine glycan is attached at Asn496. Intrachain disulfides connect Cys512–Cys544, Cys550–Cys561, and Cys555–Cys570. One can recognise an EGF-like 1 domain in the interval 546-583 (IKDRCLPNYCEHGGHCAQNWTTFYCNCSDTGYTGATCH). A glycan (N-linked (GlcNAc...) asparagine) is linked at Asn571. An intrachain disulfide couples Cys572 to Cys582. The Fibrinogen C-terminal domain occupies 584–790 (DSVYEQSCEV…LRCYGDRHFW (207 aa)). A glycan (N-linked (GlcNAc...) asparagine) is linked at Asn622. In terms of domain architecture, Laminin G-like 3 spans 791–956 (NAVSFTTEAS…KLMSGVTPGC (166 aa)). Intrachain disulfides connect Cys929-Cys956, Cys960-Cys973, Cys967-Cys982, and Cys984-Cys994. Residues 957 to 995 (LGHCSSYGSNCLNGGKCVEKQSGYSCDCTNSPNEGPFCQ) enclose the EGF-like 2 domain. Residues 1014 to 1198 (EPYLVIKNTS…VQGTLTESGC (185 aa)) form the Laminin G-like 4 domain. N-linked (GlcNAc...) asparagine glycosylation occurs at Asn1057. A disulfide bridge links Cys1163 with Cys1198. A helical membrane pass occupies residues 1238-1258 (VIGGIIALVTFVTFCVIGIMI). Topologically, residues 1259 to 1305 (HFLYLHKQSHCTNQTKEKEYSENLSNSFRNAIDLQNTASECKREYFI) are cytoplasmic.

The protein belongs to the neurexin family.

It is found in the membrane. May play a role in the correct development and proper functioning of the peripheral and central nervous system and be involved in cell adhesion and intercellular communication. In Rattus norvegicus (Rat), this protein is Contactin-associated protein like 5-4 (Cntnap5d).